We begin with the raw amino-acid sequence, 108 residues long: uncharacterized protein (108 aa).

2 consecutive transmembrane segments (helical) span residues 32-52 (YFFF…LLAI) and 68-88 (SYLL…LVVG).

It is found in the membrane. This is an uncharacterized protein from Saccharomyces cerevisiae (strain ATCC 204508 / S288c) (Baker's yeast).